The primary structure comprises 314 residues: tRNA dimethylallyltransferase (314 aa).

Residue 9–16 (GPTAVGKT) participates in ATP binding. 11–16 (TAVGKT) is a substrate binding site. The interval 34-37 (DSVQ) is interaction with substrate tRNA.

This sequence belongs to the IPP transferase family. In terms of assembly, monomer. The cofactor is Mg(2+).

The catalysed reaction is adenosine(37) in tRNA + dimethylallyl diphosphate = N(6)-dimethylallyladenosine(37) in tRNA + diphosphate. Catalyzes the transfer of a dimethylallyl group onto the adenine at position 37 in tRNAs that read codons beginning with uridine, leading to the formation of N6-(dimethylallyl)adenosine (i(6)A). The protein is tRNA dimethylallyltransferase of Desulfitobacterium hafniense (strain DSM 10664 / DCB-2).